The following is a 298-amino-acid chain: Proton-activated chloride channel (298 aa).

At 1–12 (MPIGFNKACLKN) the chain is on the cytoplasmic side. The chain crosses the membrane as a helical span at residues 13–33 (VFTVILVLIYLALTAVAVFLA). The Extracellular portion of the chain corresponds to 34–245 (YQTISDFMDK…RDPFIQQVKD (212 aa)). Residues 246 to 266 (IVTANPWNTIAILCGVFMALF) traverse the membrane as a helical segment. The Cytoplasmic portion of the chain corresponds to 267–298 (KAADFAKLSIKWMIRIRKRHIRAKMREMNQIS).

This sequence belongs to the proton-activated chloride channel family.

It is found in the cell membrane. It carries out the reaction chloride(in) = chloride(out). Functionally, chloride channel gated by pH that facilitates the entry of chloride ions into cells upon exposure to extracellular acidic pH. Displays channel activity with distinct kinetic properties compared to the human ortholog channel. This Danio rerio (Zebrafish) protein is Proton-activated chloride channel.